The following is a 332-amino-acid chain: Glycerol-3-phosphate dehydrogenase [NAD(P)+] (332 aa).

The NADPH site is built by Trp11, Arg30, and Lys108. Residues Lys108, Gly137, and Ser139 each contribute to the sn-glycerol 3-phosphate site. Ala141 is an NADPH binding site. Sn-glycerol 3-phosphate-binding residues include Lys192, Asp245, Ser255, Arg256, and Asn257. The active-site Proton acceptor is Lys192. An NADPH-binding site is contributed by Arg256. The NADPH site is built by Val280 and Glu282.

It belongs to the NAD-dependent glycerol-3-phosphate dehydrogenase family.

The protein localises to the cytoplasm. It catalyses the reaction sn-glycerol 3-phosphate + NAD(+) = dihydroxyacetone phosphate + NADH + H(+). It carries out the reaction sn-glycerol 3-phosphate + NADP(+) = dihydroxyacetone phosphate + NADPH + H(+). It participates in membrane lipid metabolism; glycerophospholipid metabolism. In terms of biological role, catalyzes the reduction of the glycolytic intermediate dihydroxyacetone phosphate (DHAP) to sn-glycerol 3-phosphate (G3P), the key precursor for phospholipid synthesis. The chain is Glycerol-3-phosphate dehydrogenase [NAD(P)+] from Burkholderia multivorans (strain ATCC 17616 / 249).